The sequence spans 630 residues: Biosynthetic arginine decarboxylase (630 aa).

At Lys99 the chain carries N6-(pyridoxal phosphate)lysine. 281 to 291 (VDIGGGLGVDY) contacts substrate.

Belongs to the Orn/Lys/Arg decarboxylase class-II family. SpeA subfamily. Requires Mg(2+) as cofactor. Pyridoxal 5'-phosphate is required as a cofactor.

The enzyme catalyses L-arginine + H(+) = agmatine + CO2. In terms of biological role, catalyzes the biosynthesis of agmatine from arginine. The chain is Biosynthetic arginine decarboxylase from Bacteroides thetaiotaomicron (strain ATCC 29148 / DSM 2079 / JCM 5827 / CCUG 10774 / NCTC 10582 / VPI-5482 / E50).